Here is a 443-residue protein sequence, read N- to C-terminus: Ribosomal protein uS12 methylthiotransferase RimO (443 aa).

The MTTase N-terminal domain maps to 1–116 (MKFHLISLGC…IAEYVGKLIA (116 aa)). Residues Cys-10, Cys-45, Cys-79, Cys-154, Cys-158, and Cys-161 each coordinate [4Fe-4S] cluster. The Radical SAM core domain occupies 140-370 (STPFFRAWVK…LELQQELSTE (231 aa)). The region spanning 373-441 (KKYVGTVQKV…QYDLVGGVVS (69 aa)) is the TRAM domain.

This sequence belongs to the methylthiotransferase family. RimO subfamily. [4Fe-4S] cluster serves as cofactor.

The protein localises to the cytoplasm. It carries out the reaction L-aspartate(89)-[ribosomal protein uS12]-hydrogen + (sulfur carrier)-SH + AH2 + 2 S-adenosyl-L-methionine = 3-methylsulfanyl-L-aspartate(89)-[ribosomal protein uS12]-hydrogen + (sulfur carrier)-H + 5'-deoxyadenosine + L-methionine + A + S-adenosyl-L-homocysteine + 2 H(+). Catalyzes the methylthiolation of an aspartic acid residue of ribosomal protein uS12. The sequence is that of Ribosomal protein uS12 methylthiotransferase RimO from Desulfotalea psychrophila (strain LSv54 / DSM 12343).